The chain runs to 35 residues: Photosystem II reaction center protein T (35 aa).

The helical transmembrane segment at 3–23 (ALVYTFLLVGTLGIIFFAIFF) threads the bilayer.

Belongs to the PsbT family. PSII is composed of 1 copy each of membrane proteins PsbA, PsbB, PsbC, PsbD, PsbE, PsbF, PsbH, PsbI, PsbJ, PsbK, PsbL, PsbM, PsbT, PsbY, PsbZ, Psb30/Ycf12, at least 3 peripheral proteins of the oxygen-evolving complex and a large number of cofactors. It forms dimeric complexes.

The protein localises to the plastid. It is found in the chloroplast thylakoid membrane. Found at the monomer-monomer interface of the photosystem II (PS II) dimer, plays a role in assembly and dimerization of PSII. PSII is a light-driven water plastoquinone oxidoreductase, using light energy to abstract electrons from H(2)O, generating a proton gradient subsequently used for ATP formation. The protein is Photosystem II reaction center protein T of Zygnema circumcarinatum (Green alga).